A 130-amino-acid polypeptide reads, in one-letter code: Small ribosomal subunit protein uS8 (130 aa).

Belongs to the universal ribosomal protein uS8 family. Part of the 30S ribosomal subunit. Contacts proteins S5 and S12.

Its function is as follows. One of the primary rRNA binding proteins, it binds directly to 16S rRNA central domain where it helps coordinate assembly of the platform of the 30S subunit. This is Small ribosomal subunit protein uS8 from Salmonella arizonae (strain ATCC BAA-731 / CDC346-86 / RSK2980).